Here is a 329-residue protein sequence, read N- to C-terminus: Malate dehydrogenase (329 aa).

Glycine 11–glycine 17 lines the NAD(+) pocket. The substrate site is built by arginine 92 and arginine 98. NAD(+)-binding positions include asparagine 105, glutamine 112, and valine 129 to asparagine 131. Substrate contacts are provided by asparagine 131 and arginine 165. Histidine 190 functions as the Proton acceptor in the catalytic mechanism.

Belongs to the LDH/MDH superfamily. MDH type 2 family.

It catalyses the reaction (S)-malate + NAD(+) = oxaloacetate + NADH + H(+). Catalyzes the reversible oxidation of malate to oxaloacetate. In Laribacter hongkongensis (strain HLHK9), this protein is Malate dehydrogenase.